Here is a 315-residue protein sequence, read N- to C-terminus: Phage tubulin-like protein (315 aa).

Residues 12 to 13 (GT), 93 to 95 (GSG), and Asn165 contribute to the GTP site.

Belongs to the FtsZ family. PhuZ subfamily. Homomultimer. Polymerizes in a strictly GTP-dependent manner.

The protein resides in the host cytoplasm. It carries out the reaction GTP + H2O = GDP + phosphate + H(+). Its activity is regulated as follows. The non-hydrolyzable GTP analog GMPCPP stabilizes filaments, which never disassemble. Its function is as follows. A tubulin-like GTPase that forms filaments, which are required for positioning viral DNA and capsids in the middle of the host cell for optimal replication. The motor component of a partition system which pushes phage DNA (encased by protein gp105) to the center of the bacterial host cell. Also required for movement of phage capsids to the vicinity of the viral DNA and rotation of the encased viral DNA at midcell. Forms filaments during the lytic phase, which position phage DNA at the center of the bacterial host cell. Filaments have a three-stranded intertwined achitecture and form a spindle-like cytoskeleton within the infected cell. Has GTPase activity. Filaments grow at the plus end and depolymerize at the minus end, a process called treadmilling, and switch from growing in a polar manner to catastrophic depolymerization, i.e. they display dynamic instability, like tubulin. In infected host cells the filament ends close to the cell pole are relatively stable, while the other end near the phage DNA is highly dynamic. Both capsid movement and DNA rotation probably require treadmilling. This chain is Phage tubulin-like protein, found in Pseudomonas phage 201phi2-1 (Pseudomonas chlororaphis phage 201phi2-1).